We begin with the raw amino-acid sequence, 252 residues long: 5-oxoprolinase subunit A (252 aa).

Belongs to the LamB/PxpA family. In terms of assembly, forms a complex composed of PxpA, PxpB and PxpC.

It carries out the reaction 5-oxo-L-proline + ATP + 2 H2O = L-glutamate + ADP + phosphate + H(+). Its function is as follows. Catalyzes the cleavage of 5-oxoproline to form L-glutamate coupled to the hydrolysis of ATP to ADP and inorganic phosphate. This chain is 5-oxoprolinase subunit A, found in Staphylococcus epidermidis (strain ATCC 35984 / DSM 28319 / BCRC 17069 / CCUG 31568 / BM 3577 / RP62A).